Here is a 109-residue protein sequence, read N- to C-terminus: Small ribosomal subunit protein eS25 (109 aa).

Positions 1–36 are disordered; it reads MGGASKKPISTVEKRMKKMAEEQQKKQQKRATTKTG. A compositionally biased stretch (basic and acidic residues) spans 12–25; it reads VEKRMKKMAEEQQK.

Belongs to the eukaryotic ribosomal protein eS25 family.

This chain is Small ribosomal subunit protein eS25 (rps25e), found in Sulfurisphaera tokodaii (strain DSM 16993 / JCM 10545 / NBRC 100140 / 7) (Sulfolobus tokodaii).